Consider the following 309-residue polypeptide: Protein FdhE homolog (309 aa).

The protein belongs to the FdhE family.

The protein localises to the cytoplasm. Its function is as follows. Necessary for formate dehydrogenase activity. In Pasteurella multocida (strain Pm70), this protein is Protein FdhE homolog.